The sequence spans 187 residues: Holliday junction branch migration complex subunit RuvA (187 aa).

The domain I stretch occupies residues 1 to 64 (MIEYVRGIIE…EDGFQIFGFK (64 aa)). The interval 65 to 136 (TKEELDLFEK…ELKDKLPKEI (72 aa)) is domain II. Residues 136-139 (IVFE) form a flexible linker region. Positions 140-187 (GDNNFSNEALEALLALGYTKSEAIYALADITCDSVEDAVKQALKKLMK) are domain III.

The protein belongs to the RuvA family. As to quaternary structure, homotetramer. Forms an RuvA(8)-RuvB(12)-Holliday junction (HJ) complex. HJ DNA is sandwiched between 2 RuvA tetramers; dsDNA enters through RuvA and exits via RuvB. An RuvB hexamer assembles on each DNA strand where it exits the tetramer. Each RuvB hexamer is contacted by two RuvA subunits (via domain III) on 2 adjacent RuvB subunits; this complex drives branch migration. In the full resolvosome a probable DNA-RuvA(4)-RuvB(12)-RuvC(2) complex forms which resolves the HJ.

It localises to the cytoplasm. In terms of biological role, the RuvA-RuvB-RuvC complex processes Holliday junction (HJ) DNA during genetic recombination and DNA repair, while the RuvA-RuvB complex plays an important role in the rescue of blocked DNA replication forks via replication fork reversal (RFR). RuvA specifically binds to HJ cruciform DNA, conferring on it an open structure. The RuvB hexamer acts as an ATP-dependent pump, pulling dsDNA into and through the RuvAB complex. HJ branch migration allows RuvC to scan DNA until it finds its consensus sequence, where it cleaves and resolves the cruciform DNA. In Thermoanaerobacter pseudethanolicus (strain ATCC 33223 / 39E) (Clostridium thermohydrosulfuricum), this protein is Holliday junction branch migration complex subunit RuvA.